Consider the following 314-residue polypeptide: Methionyl-tRNA formyltransferase (314 aa).

Residue 110–113 (SLLP) participates in (6S)-5,6,7,8-tetrahydrofolate binding.

This sequence belongs to the Fmt family.

It carries out the reaction L-methionyl-tRNA(fMet) + (6R)-10-formyltetrahydrofolate = N-formyl-L-methionyl-tRNA(fMet) + (6S)-5,6,7,8-tetrahydrofolate + H(+). Attaches a formyl group to the free amino group of methionyl-tRNA(fMet). The formyl group appears to play a dual role in the initiator identity of N-formylmethionyl-tRNA by promoting its recognition by IF2 and preventing the misappropriation of this tRNA by the elongation apparatus. The protein is Methionyl-tRNA formyltransferase of Bacillus cereus (strain AH187).